The chain runs to 161 residues: Nucleotide-binding protein Shal_3198 (161 aa).

This sequence belongs to the YajQ family.

In terms of biological role, nucleotide-binding protein. The protein is Nucleotide-binding protein Shal_3198 of Shewanella halifaxensis (strain HAW-EB4).